A 910-amino-acid polypeptide reads, in one-letter code: Epithelial discoidin domain-containing receptor 1 (910 aa).

A signal peptide spans 1–19 (MGTGTLSSLLLLLLLVTIG). Residues 22-414 (DMKGHFDPAK…VAKAEGSPTA (393 aa)) are Extracellular-facing. Residues 32 to 186 (CRYALGMQDR…VCLRVELYGC (155 aa)) enclose the F5/8 type C domain. Cystine bridges form between C32–C186 and C75–C178. The tract at residues 193-368 (LSYTAPVGQT…LFSEISFISD (176 aa)) is DS-like domain. Ca(2+) contacts are provided by N212, Q231, D234, V236, Y254, and Y256. N-linked (GlcNAc...) asparagine glycosylation is present at N212. N-linked (GlcNAc...) asparagine glycosylation occurs at N261. C304 and C349 are joined by a disulfide. 2 residues coordinate Ca(2+): S361 and E362. 2 N-linked (GlcNAc...) asparagine glycosylation sites follow: N371 and N391. Residues 415-435 (ILIGCLVAIILLLLLIIALML) form a helical membrane-spanning segment. Over 436 to 910 (WRLHWRRLLS…FLADDALNTV (475 aa)) the chain is Cytoplasmic. Positions 467–494 (ILINNRPGPREPPPYQEPRPRGTPTHSA) are disordered. The PPxY motif signature appears at 478–481 (PPPY). Phosphotyrosine; by autocatalysis occurs at positions 481, 510, and 517. In terms of domain architecture, Protein kinase spans 607–902 (LRFKEKLGEG…PPFSQLHRFL (296 aa)). ATP is bound by residues 613 to 621 (LGEGQFGEV) and K652. Y737 is modified (phosphotyrosine; by autocatalysis). D763 acts as the Proton acceptor in catalysis. Residues Y789, Y793, and Y794 each carry the phosphotyrosine; by autocatalysis modification.

The protein belongs to the protein kinase superfamily. Tyr protein kinase family. Insulin receptor subfamily. As to quaternary structure, homodimer. Interacts (via PPxY motif) with WWC1 (via WW domains) in a collagen-regulated manner. Forms a tripartite complex with WWC1 and PRKCZ, but predominantly in the absence of collagen. Interacts (tyrosine phosphorylated) with SHC1. Interacts with SRC. Interacts with MYH9. Interacts with CDH1. Interacts with PTPN11. Interacts with NCK2. In terms of processing, autophosphorylated in response to fibrillar collagen binding. As to expression, various embryonic and adult tissues; also proliferative zones of the developing brain; hippocampal neurons.

It is found in the cell membrane. The catalysed reaction is L-tyrosyl-[protein] + ATP = O-phospho-L-tyrosyl-[protein] + ADP + H(+). Tyrosine kinase that functions as a cell surface receptor for fibrillar collagen and regulates cell attachment to the extracellular matrix, remodeling of the extracellular matrix, cell migration, differentiation, survival and cell proliferation. Collagen binding triggers a signaling pathway that involves SRC and leads to the activation of MAP kinases. Regulates remodeling of the extracellular matrix by up-regulation of the matrix metalloproteinases MMP2, MMP7 and MMP9, and thereby facilitates cell migration and wound healing. Promotes smooth muscle cell migration, and thereby contributes to arterial wound healing. Also plays a role in tumor cell invasion. Phosphorylates PTPN11. Required for normal blastocyst implantation during pregnancy, for normal mammary gland differentiation and normal lactation. Required for normal ear morphology and normal hearing. In Rattus norvegicus (Rat), this protein is Epithelial discoidin domain-containing receptor 1 (Ddr1).